The primary structure comprises 135 residues: Large ribosomal subunit protein bL17 (135 aa).

The protein belongs to the bacterial ribosomal protein bL17 family. In terms of assembly, part of the 50S ribosomal subunit. Contacts protein L32.

The protein is Large ribosomal subunit protein bL17 of Listeria welshimeri serovar 6b (strain ATCC 35897 / DSM 20650 / CCUG 15529 / CIP 8149 / NCTC 11857 / SLCC 5334 / V8).